The sequence spans 843 residues: Aminopeptidase N (843 aa).

Residues glutamate 120 and 252–256 (GAMEN) each bind substrate. Histidine 288 is a binding site for Zn(2+). The active-site Proton acceptor is the glutamate 289. The Zn(2+) site is built by histidine 292 and glutamate 311.

Belongs to the peptidase M1 family. Monomer. Requires Zn(2+) as cofactor.

Its subcellular location is the cytoplasm. The catalysed reaction is Release of an N-terminal amino acid, Xaa-|-Yaa- from a peptide, amide or arylamide. Xaa is preferably Ala, but may be most amino acids including Pro (slow action). When a terminal hydrophobic residue is followed by a prolyl residue, the two may be released as an intact Xaa-Pro dipeptide.. Functionally, aminopeptidase with broad substrate specificity to several peptides. In Lactobacillus delbrueckii subsp. lactis, this protein is Aminopeptidase N (pepN).